Consider the following 82-residue polypeptide: Small ribosomal subunit protein bS18 (82 aa).

This sequence belongs to the bacterial ribosomal protein bS18 family. As to quaternary structure, part of the 30S ribosomal subunit. Forms a tight heterodimer with protein bS6.

Functionally, binds as a heterodimer with protein bS6 to the central domain of the 16S rRNA, where it helps stabilize the platform of the 30S subunit. The polypeptide is Small ribosomal subunit protein bS18 (Methylobacterium nodulans (strain LMG 21967 / CNCM I-2342 / ORS 2060)).